Reading from the N-terminus, the 156-residue chain is Small ribosomal subunit protein uS7 (156 aa).

The protein belongs to the universal ribosomal protein uS7 family. As to quaternary structure, part of the 30S ribosomal subunit. Contacts proteins S9 and S11.

One of the primary rRNA binding proteins, it binds directly to 16S rRNA where it nucleates assembly of the head domain of the 30S subunit. Is located at the subunit interface close to the decoding center, probably blocks exit of the E-site tRNA. The polypeptide is Small ribosomal subunit protein uS7 (Wigglesworthia glossinidia brevipalpis).